Here is an 853-residue protein sequence, read N- to C-terminus: MLQTKNLIWTLFFLGTAVSLQVDIVPSQGEISVGESKFFLCQVAGDAKDKDISWFSPNGEKLTPNQQRISVVWNDDSSSTLTIYNANIDDAGIYKCVVTAEDGTESEATVNVKIFQKLMFKNAPTPQEFREGEDAVIVCDVVSSLPPTIIWKHKGRDVILKKDVRFIVLTNNYLQIRGIKKTDEGTYRCEGRILARGEINFKDIQVIVNVPPTVQARQSIVNATANLGQSVTLVCNAEGFPEPTVSWTKDGEQIENEEDEKYLFSDDSSELTIRKVDKNDEAEYVCIAENKAGEQDASIHLKVFAKPKITYVENQTAMELEEQVTLTCEASGDPIPSITWRTSTRNISSEEKASWTRPEKQETLDGHMVVRSHARVSSLTLKSIQYTDAGEYVCTASNTIGQDSQSMYLEVQYAPKLQGPVAVYTWEGNQVNITCEVFAYPSATISWFRDGQLLPSSNYSNIKIYNTPSASYLEVTPDSENDFGNYNCTAVNRIGQESLEFVLVQADTPSSPSIDQVEPYSSTAQVQFDEPEATGGVPILKYKAEWRAMGEEVWHSKWYDAKEASMEGIVTIVGLKPETTYAVRLAALNGKGLGEISAASEFKTQPVREPSAPKLEGQMGEDGNSIKVKLIKQDDGGSPIRHYLVKYRALSSEWKPEIRLPSGSDHVMLKSLDWNAEYEVYVVAENQQGKSKAAHFVFRTSAQPTAIPANGSPTSGLSTGAIVGILVVTFVLLLVAVDVTCYFLNKCGLLMCIAVNLCGKAGPGAKGKDMEEGKAAFSKDESKEPIVEVRTEEERTPNHDGGKHTEPNETTPLTEPEKGPVEAKPETETKPAPAEVQTVPNDATQIKVNESKA.

The N-terminal stretch at 1–19 (MLQTKNLIWTLFFLGTAVS) is a signal peptide. 5 consecutive Ig-like C2-type domains span residues 20–111 (LQVD…ATVN), 116–205 (QKLM…KDIQ), 212–300 (PTVQ…ASIH), 307–412 (PKIT…LEVQ), and 415–500 (PKLQ…ESLE). Over 20–719 (LQVDIVPSQG…NGSPTSGLST (700 aa)) the chain is Extracellular. Cystine bridges form between cysteine 41-cysteine 96 and cysteine 139-cysteine 189. Heparin-binding positions include 152–156 (KHKGR) and 161–165 (KKDVR). Asparagine 222 is a glycosylation site (N-linked (GlcNAc...) asparagine). A disulfide bridge connects residues cysteine 235 and cysteine 286. Asparagine 314, asparagine 346, asparagine 432, asparagine 458, and asparagine 487 each carry an N-linked (GlcNAc...) asparagine glycan. Cysteine 328 and cysteine 394 are joined by a disulfide. A disulfide bridge connects residues cysteine 435 and cysteine 488. 2 consecutive Fibronectin type-III domains span residues 508 to 607 (TPSS…TQPV) and 609 to 704 (EPSA…SAQP). The chain crosses the membrane as a helical span at residues 720–737 (GAIVGILVVTFVLLLVAV). Over 738 to 853 (DVTCYFLNKC…TQIKVNESKA (116 aa)) the chain is Cytoplasmic. Positions 764 to 853 (GAKGKDMEEG…TQIKVNESKA (90 aa)) are disordered. Composition is skewed to basic and acidic residues over residues 766–807 (KGKD…HTEP) and 815–829 (EPEK…ETET). Phosphoserine is present on residues serine 778 and serine 782. Residues 838-853 (TVPNDATQIKVNESKA) are compositionally biased toward polar residues.

As to quaternary structure, interacts with MDK. Found in a complex with SLC39A6, SLC39A10 and with NCAM1; this complex controls NCAM1 phosphorylation and integration into focal adhesion complexes during epithelial-tomesenchymal transition. Interacts with synaptic plasticity regulator PANTS. Post-translationally, polysialylated by ST8SIA2 and ST8SIA4. Polysialylation modulates cell interactions by confering both attractive and repulsive properties that are highly regulated by ST8SIA2 and ST8SIA4. Polysialylation is formed on a-2,3-linked sialic acid of core glycans.

The protein resides in the cell membrane. Functionally, this protein is a cell adhesion molecule involved in neuron-neuron adhesion, neurite fasciculation, outgrowth of neurites, etc. The polypeptide is Neural cell adhesion molecule 1 (Bos taurus (Bovine)).